Consider the following 804-residue polypeptide: MSFQHEKIEKKWQNYWLDHKTFAVSEENDKPKFYALDMFPYPSGAGLHVGHPEGYTATDILSRMRRMQGYNVLHPMGWDAFGLPAEQYALDTGNDPAEFTKQNIDNFRRQIQSLGFSYDWDREINTTDPDYYKWTQWIFTKLYEKGLAYVDEVPVNWCPALGTVLANEEVIDGKSERGGHPVERRPMRQWMLKITAYADRLLEDLEDLDWPESIKDMQRNWIGRSEGANVHFAIDGTDDTFTVFTTRPDTLFGAAYAVLAPEHELVEAITTPEQKEAVDAYVKEVQAKSDLERTDLAKTKTGVFTGAYAVNPANGEKLPIWIADYVLASYGTGAVMAVPAHDERDFEFAKVFSLPVKEVVKGGNTEEEAYTGDGEHVNSGFLNGLKKAEAIEKMIAWLEETKNGEKKVTYRLRDWLFSRQRYWGEPIPVIHWEDGTSTAVPAEELPLILPKTDEIKPSGTGESPLANIKEWVEVTDPETGKKGRRETNTMPQWAGSCWYFLRFIDPKNPDQLASPEKLDKWLPVDIYIGGAEHAVLHLLYARFWHKFLYDIGVVPTKEPFQKLYNQGMILGENNEKMSKSRGNVVNPDEIVASHGADTLRLYEMFMGPLDASIAWSESGLDGARRFLDRVWRLFIEENGELTGKVTEGAGETLERVYHETVMKVTENFEALRFNTGISQLMVFINEAYKANELPREYIEGFVKLLSPIAPHLAEELWEKLGHEGSIAYEAWPAYDESKLVDDEVEIVVQLNGKVKAKLMVPADADKAALEQLAQADEKVKEQLEGKTIRKIIAVPGKLVNIVAN.

A 'HIGH' region motif is present at residues 40 to 51 (PYPSGAGLHVGH). A 'KMSKS' region motif is present at residues 576-580 (KMSKS). ATP is bound at residue lysine 579.

This sequence belongs to the class-I aminoacyl-tRNA synthetase family.

It localises to the cytoplasm. It carries out the reaction tRNA(Leu) + L-leucine + ATP = L-leucyl-tRNA(Leu) + AMP + diphosphate. This Bacillus velezensis (strain DSM 23117 / BGSC 10A6 / LMG 26770 / FZB42) (Bacillus amyloliquefaciens subsp. plantarum) protein is Leucine--tRNA ligase.